Reading from the N-terminus, the 703-residue chain is Polyribonucleotide nucleotidyltransferase (703 aa).

Residues aspartate 487 and aspartate 493 each coordinate Mg(2+). The region spanning 554–613 (PKMETIKIDPDKIRDVIGKGGATIRSICEDTGASIDIDDNGTVRIYAESKLAADEAIYRI) is the KH domain. Residues 623-691 (GKLYRGKVER…ARGRIKLSMK (69 aa)) form the S1 motif domain.

It belongs to the polyribonucleotide nucleotidyltransferase family. As to quaternary structure, component of the RNA degradosome, which is a multiprotein complex involved in RNA processing and mRNA degradation. Mg(2+) is required as a cofactor.

Its subcellular location is the cytoplasm. The catalysed reaction is RNA(n+1) + phosphate = RNA(n) + a ribonucleoside 5'-diphosphate. Involved in mRNA degradation. Catalyzes the phosphorolysis of single-stranded polyribonucleotides processively in the 3'- to 5'-direction. The protein is Polyribonucleotide nucleotidyltransferase of Hahella chejuensis (strain KCTC 2396).